We begin with the raw amino-acid sequence, 442 residues long: UDP-N-acetylmuramate--L-alanine ligase (442 aa).

G109–S115 serves as a coordination point for ATP.

The protein belongs to the MurCDEF family.

Its subcellular location is the cytoplasm. The catalysed reaction is UDP-N-acetyl-alpha-D-muramate + L-alanine + ATP = UDP-N-acetyl-alpha-D-muramoyl-L-alanine + ADP + phosphate + H(+). The protein operates within cell wall biogenesis; peptidoglycan biosynthesis. In terms of biological role, cell wall formation. The protein is UDP-N-acetylmuramate--L-alanine ligase of Streptococcus pyogenes serotype M28 (strain MGAS6180).